We begin with the raw amino-acid sequence, 431 residues long: Enolase (431 aa).

Q167 is a binding site for (2R)-2-phosphoglycerate. E209 acts as the Proton donor in catalysis. Mg(2+) is bound by residues D246, E289, and D316. K341, R370, S371, and K392 together coordinate (2R)-2-phosphoglycerate. The active-site Proton acceptor is K341.

It belongs to the enolase family. In terms of assembly, component of the RNA degradosome, a multiprotein complex involved in RNA processing and mRNA degradation. Mg(2+) serves as cofactor.

The protein resides in the cytoplasm. Its subcellular location is the secreted. The protein localises to the cell surface. The enzyme catalyses (2R)-2-phosphoglycerate = phosphoenolpyruvate + H2O. The protein operates within carbohydrate degradation; glycolysis; pyruvate from D-glyceraldehyde 3-phosphate: step 4/5. Catalyzes the reversible conversion of 2-phosphoglycerate (2-PG) into phosphoenolpyruvate (PEP). It is essential for the degradation of carbohydrates via glycolysis. The sequence is that of Enolase from Shewanella putrefaciens (strain CN-32 / ATCC BAA-453).